The chain runs to 117 residues: UPF0102 protein Clos_1471 (117 aa).

The protein belongs to the UPF0102 family.

This is UPF0102 protein Clos_1471 from Alkaliphilus oremlandii (strain OhILAs) (Clostridium oremlandii (strain OhILAs)).